The following is a 187-amino-acid chain: Large ribosomal subunit protein eL18B (187 aa).

Threonine 134 is modified (phosphothreonine). At serine 136 the chain carries Phosphoserine.

The protein belongs to the eukaryotic ribosomal protein eL18 family. As to quaternary structure, component of the large ribosomal subunit (LSU). Mature yeast ribosomes consist of a small (40S) and a large (60S) subunit. The 40S small subunit contains 1 molecule of ribosomal RNA (18S rRNA) and at least 33 different proteins. The large 60S subunit contains 3 rRNA molecules (25S, 5.8S and 5S rRNA) and at least 46 different proteins. eL18 interacts with NAP1.

It is found in the cytoplasm. Its function is as follows. Component of the ribosome, a large ribonucleoprotein complex responsible for the synthesis of proteins in the cell. The small ribosomal subunit (SSU) binds messenger RNAs (mRNAs) and translates the encoded message by selecting cognate aminoacyl-transfer RNA (tRNA) molecules. The large subunit (LSU) contains the ribosomal catalytic site termed the peptidyl transferase center (PTC), which catalyzes the formation of peptide bonds, thereby polymerizing the amino acids delivered by tRNAs into a polypeptide chain. The nascent polypeptides leave the ribosome through a tunnel in the LSU and interact with protein factors that function in enzymatic processing, targeting, and the membrane insertion of nascent chains at the exit of the ribosomal tunnel. The chain is Large ribosomal subunit protein eL18B (rpl1802) from Schizosaccharomyces pombe (strain 972 / ATCC 24843) (Fission yeast).